The chain runs to 138 residues: Small ribosomal subunit protein uS8c (138 aa).

Belongs to the universal ribosomal protein uS8 family. Part of the 30S ribosomal subunit.

Its subcellular location is the plastid. The protein localises to the chloroplast. Functionally, one of the primary rRNA binding proteins, it binds directly to 16S rRNA central domain where it helps coordinate assembly of the platform of the 30S subunit. This is Small ribosomal subunit protein uS8c (rps8) from Chlorella vulgaris (Green alga).